A 306-amino-acid chain; its full sequence is UDP-3-O-acyl-N-acetylglucosamine deacetylase (306 aa).

Zn(2+)-binding residues include His-79, His-239, and Asp-243. His-266 serves as the catalytic Proton donor.

It belongs to the LpxC family. Zn(2+) is required as a cofactor.

It catalyses the reaction a UDP-3-O-[(3R)-3-hydroxyacyl]-N-acetyl-alpha-D-glucosamine + H2O = a UDP-3-O-[(3R)-3-hydroxyacyl]-alpha-D-glucosamine + acetate. Its pathway is glycolipid biosynthesis; lipid IV(A) biosynthesis; lipid IV(A) from (3R)-3-hydroxytetradecanoyl-[acyl-carrier-protein] and UDP-N-acetyl-alpha-D-glucosamine: step 2/6. Functionally, catalyzes the hydrolysis of UDP-3-O-myristoyl-N-acetylglucosamine to form UDP-3-O-myristoylglucosamine and acetate, the committed step in lipid A biosynthesis. This Haemophilus ducreyi (strain 35000HP / ATCC 700724) protein is UDP-3-O-acyl-N-acetylglucosamine deacetylase.